A 501-amino-acid chain; its full sequence is Probable cytosol aminopeptidase (501 aa).

Residues K268 and D273 each coordinate Mn(2+). K280 is an active-site residue. The Mn(2+) site is built by D291, D350, and E352. R354 is a catalytic residue.

It belongs to the peptidase M17 family. It depends on Mn(2+) as a cofactor.

It is found in the cytoplasm. The enzyme catalyses Release of an N-terminal amino acid, Xaa-|-Yaa-, in which Xaa is preferably Leu, but may be other amino acids including Pro although not Arg or Lys, and Yaa may be Pro. Amino acid amides and methyl esters are also readily hydrolyzed, but rates on arylamides are exceedingly low.. The catalysed reaction is Release of an N-terminal amino acid, preferentially leucine, but not glutamic or aspartic acids.. Its function is as follows. Presumably involved in the processing and regular turnover of intracellular proteins. Catalyzes the removal of unsubstituted N-terminal amino acids from various peptides. In Pseudoalteromonas atlantica (strain T6c / ATCC BAA-1087), this protein is Probable cytosol aminopeptidase.